Here is a 304-residue protein sequence, read N- to C-terminus: Acetyl-coenzyme A carboxylase carboxyl transferase subunit beta (304 aa).

Residues 25 to 294 (LWIKCPETGE…KAVKRDTATE (270 aa)) form the CoA carboxyltransferase N-terminal domain.

It belongs to the AccD/PCCB family. As to quaternary structure, acetyl-CoA carboxylase is a heterohexamer composed of biotin carboxyl carrier protein (AccB), biotin carboxylase (AccC) and two subunits each of ACCase subunit alpha (AccA) and ACCase subunit beta (AccD).

It localises to the cytoplasm. It carries out the reaction N(6)-carboxybiotinyl-L-lysyl-[protein] + acetyl-CoA = N(6)-biotinyl-L-lysyl-[protein] + malonyl-CoA. It functions in the pathway lipid metabolism; malonyl-CoA biosynthesis; malonyl-CoA from acetyl-CoA: step 1/1. Component of the acetyl coenzyme A carboxylase (ACC) complex. Biotin carboxylase (BC) catalyzes the carboxylation of biotin on its carrier protein (BCCP) and then the CO(2) group is transferred by the transcarboxylase to acetyl-CoA to form malonyl-CoA. This chain is Acetyl-coenzyme A carboxylase carboxyl transferase subunit beta, found in Rhizobium meliloti (strain 1021) (Ensifer meliloti).